A 222-amino-acid chain; its full sequence is Peptidyl-prolyl cis-trans isomerase FKBP7 (222 aa).

The first 23 residues, 1–23 (MPKTMHFLFRFIVFFYLWGLFTA), serve as a signal peptide directing secretion. Asn-45 carries an N-linked (GlcNAc...) asparagine glycan. The PPIase FKBP-type domain maps to 53–145 (GDLLNAHYDG…IFEIELYAVT (93 aa)). 2 consecutive EF-hand domains span residues 145 to 180 (TKGPRSIETFKQIDMDNDRQLSKAEINLYLQREFEK) and 189 to 222 (YQDAVLEDIFKKNDHDGDGFISPKEYNVYQHDEL). Ca(2+) contacts are provided by Asp-158, Asp-160, Asp-162, Gln-164, Glu-169, Asp-202, Asp-204, Asp-206, and Glu-213. Residues 200 to 222 (KNDHDGDGFISPKEYNVYQHDEL) are disordered. A Retention in the endoplasmic reticulum motif is present at residues 219 to 222 (HDEL).

Glycosylated.

It is found in the endoplasmic reticulum lumen. The enzyme catalyses [protein]-peptidylproline (omega=180) = [protein]-peptidylproline (omega=0). Its function is as follows. PPIases accelerate the folding of proteins during protein synthesis. In Homo sapiens (Human), this protein is Peptidyl-prolyl cis-trans isomerase FKBP7 (FKBP7).